Reading from the N-terminus, the 213-residue chain is Probable transaldolase (213 aa).

The active-site Schiff-base intermediate with substrate is the Lys83.

This sequence belongs to the transaldolase family. Type 3B subfamily.

It localises to the cytoplasm. It catalyses the reaction D-sedoheptulose 7-phosphate + D-glyceraldehyde 3-phosphate = D-erythrose 4-phosphate + beta-D-fructose 6-phosphate. It participates in carbohydrate degradation; pentose phosphate pathway; D-glyceraldehyde 3-phosphate and beta-D-fructose 6-phosphate from D-ribose 5-phosphate and D-xylulose 5-phosphate (non-oxidative stage): step 2/3. In terms of biological role, transaldolase is important for the balance of metabolites in the pentose-phosphate pathway. The protein is Probable transaldolase of Desulfitobacterium hafniense (strain DSM 10664 / DCB-2).